A 468-amino-acid polypeptide reads, in one-letter code: Glycine--tRNA ligase (468 aa).

Arginine 101 and glutamate 170 together coordinate substrate. ATP contacts are provided by residues 202–204 (RNE), 212–217 (FRTREF), 289–290 (EL), and 333–336 (GLTR). 217–221 (FEQME) is a substrate binding site. 329 to 333 (EPAAG) lines the substrate pocket.

The protein belongs to the class-II aminoacyl-tRNA synthetase family. In terms of assembly, homodimer.

The protein localises to the cytoplasm. The enzyme catalyses tRNA(Gly) + glycine + ATP = glycyl-tRNA(Gly) + AMP + diphosphate. Its function is as follows. Catalyzes the attachment of glycine to tRNA(Gly). The sequence is that of Glycine--tRNA ligase from Mycolicibacterium vanbaalenii (strain DSM 7251 / JCM 13017 / BCRC 16820 / KCTC 9966 / NRRL B-24157 / PYR-1) (Mycobacterium vanbaalenii).